Consider the following 805-residue polypeptide: Leucine--tRNA ligase (805 aa).

The 'HIGH' region signature appears at 40-51; the sequence is PYPSGSGLHVGH. The short motif at 576 to 580 is the 'KMSKS' region element; the sequence is KMSKS. ATP is bound at residue lysine 579.

It belongs to the class-I aminoacyl-tRNA synthetase family.

The protein localises to the cytoplasm. The enzyme catalyses tRNA(Leu) + L-leucine + ATP = L-leucyl-tRNA(Leu) + AMP + diphosphate. The sequence is that of Leucine--tRNA ligase from Chlorobium limicola (strain DSM 245 / NBRC 103803 / 6330).